A 966-amino-acid polypeptide reads, in one-letter code: DNA mismatch repair protein MutS (966 aa).

709–716 (GPNMAGKS) lines the ATP pocket. The tract at residues 894–914 (EGQRPPSSPAQPPAPPAPVVV) is disordered. The segment covering 899–912 (PSSPAQPPAPPAPV) has biased composition (pro residues).

This sequence belongs to the DNA mismatch repair MutS family.

Functionally, this protein is involved in the repair of mismatches in DNA. It is possible that it carries out the mismatch recognition step. This protein has a weak ATPase activity. This is DNA mismatch repair protein MutS from Chloroflexus aurantiacus (strain ATCC 29366 / DSM 635 / J-10-fl).